Reading from the N-terminus, the 314-residue chain is Ribosomal RNA small subunit methyltransferase H (314 aa).

Residues 32 to 34, D52, F79, D100, and Q107 contribute to the S-adenosyl-L-methionine site; that span reads GGH.

The protein belongs to the methyltransferase superfamily. RsmH family.

The protein localises to the cytoplasm. It carries out the reaction cytidine(1402) in 16S rRNA + S-adenosyl-L-methionine = N(4)-methylcytidine(1402) in 16S rRNA + S-adenosyl-L-homocysteine + H(+). In terms of biological role, specifically methylates the N4 position of cytidine in position 1402 (C1402) of 16S rRNA. This Shouchella clausii (strain KSM-K16) (Alkalihalobacillus clausii) protein is Ribosomal RNA small subunit methyltransferase H.